A 299-amino-acid polypeptide reads, in one-letter code: Diaminopimelate epimerase (299 aa).

Residues N11 and N63 each coordinate substrate. C72 functions as the Proton donor in the catalytic mechanism. Substrate is bound by residues 73 to 74, N211, and 229 to 230; these read GN and ER. C238 serves as the catalytic Proton acceptor. 239-240 provides a ligand contact to substrate; sequence GT.

The protein belongs to the diaminopimelate epimerase family. In terms of assembly, homodimer.

It localises to the cytoplasm. The enzyme catalyses (2S,6S)-2,6-diaminopimelate = meso-2,6-diaminopimelate. Its pathway is amino-acid biosynthesis; L-lysine biosynthesis via DAP pathway; DL-2,6-diaminopimelate from LL-2,6-diaminopimelate: step 1/1. Functionally, catalyzes the stereoinversion of LL-2,6-diaminopimelate (L,L-DAP) to meso-diaminopimelate (meso-DAP), a precursor of L-lysine and an essential component of the bacterial peptidoglycan. The sequence is that of Diaminopimelate epimerase from Natranaerobius thermophilus (strain ATCC BAA-1301 / DSM 18059 / JW/NM-WN-LF).